The primary structure comprises 102 residues: Acid shock protein (102 aa).

Positions 1-21 (MKKVLALVVAAAMGLSSAAFA) are cleaved as a signal peptide. The span at 22 to 41 (AETATTPAPTATTTKAAPAK) shows a compositional bias: low complexity. Positions 22-58 (AETATTPAPTATTTKAAPAKTTHHKKQHKAAPAQKAQ) are excised as a propeptide. Positions 22-102 (AETATTPAPT…PAKPAAQPAA (81 aa)) are disordered. Residues 80–90 (AAKKHAGKHGH) show a composition bias toward basic residues. Residues 91 to 102 (QQPAKPAAQPAA) show a composition bias toward low complexity.

Belongs to the Asr family. Proteolytic processing gives rise to the active protein.

The protein resides in the periplasm. In terms of biological role, required for growth and/or survival at acidic conditions. This is Acid shock protein from Shigella flexneri.